Here is a 349-residue protein sequence, read N- to C-terminus: SUMO-activating enzyme subunit 1 (349 aa).

At Met-1 the chain carries N-acetylmethionine. Val-2 carries the post-translational modification N-acetylvaline; in SUMO-activating enzyme subunit 1, N-terminally processed. Ser-15 carries the post-translational modification Phosphoserine. The residue at position 201 (Lys-201) is an N6-acetyllysine.

Belongs to the ubiquitin-activating E1 family. In terms of assembly, heterodimer of SAE1 and UBA2/SAE2. The heterodimer corresponds to the two domains that are encoded on a single polypeptide chain in ubiquitin-activating enzyme E1. Interacts with UBE2I.

The protein resides in the nucleus. It participates in protein modification; protein sumoylation. In terms of biological role, the heterodimer acts as an E1 ligase for SUMO1, SUMO2, SUMO3, and probably SUMO4. It mediates ATP-dependent activation of SUMO proteins followed by formation of a thioester bond between a SUMO protein and a conserved active site cysteine residue on UBA2/SAE2. The chain is SUMO-activating enzyme subunit 1 (Sae1) from Rattus norvegicus (Rat).